A 271-amino-acid polypeptide reads, in one-letter code: 3-methyl-2-oxobutanoate hydroxymethyltransferase (271 aa).

The Mg(2+) site is built by Asp51 and Asp90. Residues 51–52 (DS), Asp90, and Lys118 each bind 3-methyl-2-oxobutanoate. Mg(2+) is bound at residue Glu120. Glu186 functions as the Proton acceptor in the catalytic mechanism.

Belongs to the PanB family. In terms of assembly, homodecamer; pentamer of dimers. It depends on Mg(2+) as a cofactor.

Its subcellular location is the cytoplasm. It catalyses the reaction 3-methyl-2-oxobutanoate + (6R)-5,10-methylene-5,6,7,8-tetrahydrofolate + H2O = 2-dehydropantoate + (6S)-5,6,7,8-tetrahydrofolate. It functions in the pathway cofactor biosynthesis; (R)-pantothenate biosynthesis; (R)-pantoate from 3-methyl-2-oxobutanoate: step 1/2. Catalyzes the reversible reaction in which hydroxymethyl group from 5,10-methylenetetrahydrofolate is transferred onto alpha-ketoisovalerate to form ketopantoate. The sequence is that of 3-methyl-2-oxobutanoate hydroxymethyltransferase from Xanthomonas euvesicatoria pv. vesicatoria (strain 85-10) (Xanthomonas campestris pv. vesicatoria).